Consider the following 256-residue polypeptide: Acetyl-coenzyme A carboxylase carboxyl transferase subunit alpha (256 aa).

One can recognise a CoA carboxyltransferase C-terminal domain in the interval 1-236 (MTDVSRVLKE…KANLIEQITS (236 aa)).

It belongs to the AccA family. In terms of assembly, acetyl-CoA carboxylase is a heterohexamer composed of biotin carboxyl carrier protein (AccB), biotin carboxylase (AccC) and two subunits each of ACCase subunit alpha (AccA) and ACCase subunit beta (AccD).

The protein localises to the cytoplasm. It catalyses the reaction N(6)-carboxybiotinyl-L-lysyl-[protein] + acetyl-CoA = N(6)-biotinyl-L-lysyl-[protein] + malonyl-CoA. It participates in lipid metabolism; malonyl-CoA biosynthesis; malonyl-CoA from acetyl-CoA: step 1/1. In terms of biological role, component of the acetyl coenzyme A carboxylase (ACC) complex. First, biotin carboxylase catalyzes the carboxylation of biotin on its carrier protein (BCCP) and then the CO(2) group is transferred by the carboxyltransferase to acetyl-CoA to form malonyl-CoA. The protein is Acetyl-coenzyme A carboxylase carboxyl transferase subunit alpha of Streptococcus pyogenes serotype M12 (strain MGAS2096).